Consider the following 364-residue polypeptide: tRNA-specific 2-thiouridylase MnmA (364 aa).

ATP contacts are provided by residues 6-13 (AMSGGVDS) and leucine 32. Cysteine 101 acts as the Nucleophile in catalysis. Cysteines 101 and 193 form a disulfide. Position 125 (glycine 125) interacts with ATP. Positions 143-145 (KDQ) are interaction with tRNA. Cysteine 193 serves as the catalytic Cysteine persulfide intermediate.

It belongs to the MnmA/TRMU family.

The protein resides in the cytoplasm. It catalyses the reaction S-sulfanyl-L-cysteinyl-[protein] + uridine(34) in tRNA + AH2 + ATP = 2-thiouridine(34) in tRNA + L-cysteinyl-[protein] + A + AMP + diphosphate + H(+). Its function is as follows. Catalyzes the 2-thiolation of uridine at the wobble position (U34) of tRNA, leading to the formation of s(2)U34. This chain is tRNA-specific 2-thiouridylase MnmA, found in Rhodococcus jostii (strain RHA1).